The chain runs to 179 residues: Large ribosomal subunit protein uL5 (179 aa).

It belongs to the universal ribosomal protein uL5 family. Part of the 50S ribosomal subunit; part of the 5S rRNA/L5/L18/L25 subcomplex. Contacts the 5S rRNA and the P site tRNA. Forms a bridge to the 30S subunit in the 70S ribosome.

Functionally, this is one of the proteins that bind and probably mediate the attachment of the 5S RNA into the large ribosomal subunit, where it forms part of the central protuberance. In the 70S ribosome it contacts protein S13 of the 30S subunit (bridge B1b), connecting the 2 subunits; this bridge is implicated in subunit movement. Contacts the P site tRNA; the 5S rRNA and some of its associated proteins might help stabilize positioning of ribosome-bound tRNAs. In Dichelobacter nodosus (strain VCS1703A), this protein is Large ribosomal subunit protein uL5.